The following is a 467-amino-acid chain: Flagellum-specific ATP synthase (467 aa).

180 to 187 is a binding site for ATP; sequence AGSGVGKS.

It belongs to the ATPase alpha/beta chains family.

Its subcellular location is the cytoplasm. It catalyses the reaction ATP + H2O + 4 H(+)(in) = ADP + phosphate + 5 H(+)(out). Its function is as follows. Probable catalytic subunit of a protein translocase for flagellum-specific export, or a proton translocase involved in local circuits at the flagellum. This chain is Flagellum-specific ATP synthase (fliI), found in Rhizobium meliloti (strain 1021) (Ensifer meliloti).